A 31-amino-acid chain; its full sequence is Cytochrome b6-f complex subunit 6 (31 aa).

The chain crosses the membrane as a helical span at residues 4 to 24 (IISYFLFLIGALTLALVLFIG).

It belongs to the PetL family. In terms of assembly, the 4 large subunits of the cytochrome b6-f complex are cytochrome b6, subunit IV (17 kDa polypeptide, PetD), cytochrome f and the Rieske protein, while the 4 small subunits are PetG, PetL, PetM and PetN. The complex functions as a dimer.

Its subcellular location is the plastid. It is found in the chloroplast thylakoid membrane. Functionally, component of the cytochrome b6-f complex, which mediates electron transfer between photosystem II (PSII) and photosystem I (PSI), cyclic electron flow around PSI, and state transitions. PetL is important for photoautotrophic growth as well as for electron transfer efficiency and stability of the cytochrome b6-f complex. The sequence is that of Cytochrome b6-f complex subunit 6 from Marchantia polymorpha (Common liverwort).